A 505-amino-acid chain; its full sequence is Amidophosphoribosyltransferase (505 aa).

The Nucleophile role is filled by cysteine 2. Positions cysteine 2–glutamate 236 constitute a Glutamine amidotransferase type-2 domain. The Mg(2+) site is built by threonine 305, aspartate 367, and aspartate 368.

In the C-terminal section; belongs to the purine/pyrimidine phosphoribosyltransferase family. As to quaternary structure, homotetramer. Mg(2+) is required as a cofactor.

It carries out the reaction 5-phospho-beta-D-ribosylamine + L-glutamate + diphosphate = 5-phospho-alpha-D-ribose 1-diphosphate + L-glutamine + H2O. Its pathway is purine metabolism; IMP biosynthesis via de novo pathway; N(1)-(5-phospho-D-ribosyl)glycinamide from 5-phospho-alpha-D-ribose 1-diphosphate: step 1/2. Its activity is regulated as follows. Inhibited by iodoacetamide and by the glutamine analogs chloroketone and DON. Its function is as follows. Catalyzes the formation of phosphoribosylamine from phosphoribosylpyrophosphate (PRPP) and glutamine. Can also use NH(3) in place of glutamine. The protein is Amidophosphoribosyltransferase of Escherichia coli (strain K12).